The primary structure comprises 297 residues: Taste receptor type 2 member 4 (297 aa).

Topologically, residues 1–11 (MLWELYVFVFA) are extracellular. The helical transmembrane segment at 12-32 (ASVFLNFVGIIANLFIIVIII) threads the bilayer. Residues 33 to 46 (KTWVNSRRIASPDR) lie on the Cytoplasmic side of the membrane. The chain crosses the membrane as a helical span at residues 47 to 67 (ILFSLAITRFLTLGLFLLNSV). The Extracellular portion of the chain corresponds to 68–80 (YIATNTGRSVYFS). Residues 81-101 (TFFLLCWKFLDANSLWLVTIL) form a helical membrane-spanning segment. At 102-128 (NSLYCVKITNFQHPVFLLLKRTISMKT) the chain is on the cytoplasmic side. A helical membrane pass occupies residues 129–149 (TSLLLACLLISALTTLLYYML). Over 150-171 (SQISRFPEHIIGRNDTSFDLSD) the chain is Extracellular. N-linked (GlcNAc...) asparagine glycosylation is present at Asn-163. A helical transmembrane segment spans residues 172–192 (GILTLVASLVLNSLLQFMLNV). Topologically, residues 193–229 (TFASLLIHSLRRHIQKMQRNRTSFWNPQTEAHMGAMR) are cytoplasmic. Residues 230–250 (LMICFLVLYIPYSIATLLYLP) form a helical membrane-spanning segment. Residues 251 to 260 (SYMRKNLRAQ) are Extracellular-facing. Residues 261 to 281 (AICMIITAAYPPGHSVLLIIT) form a helical membrane-spanning segment. The Cytoplasmic portion of the chain corresponds to 282–297 (HHKLKAKAKKIFCFYK).

The protein belongs to the G-protein coupled receptor T2R family. Expressed in subsets of taste receptor cells of the tongue and palate epithelium and exclusively in gustducin-positive cells. Expressed in 15% taste bud cells in circumvallate and foliate papillae but only in 2% in fungiform papillae.

It localises to the membrane. Its subcellular location is the cell projection. The protein localises to the cilium membrane. In terms of biological role, gustducin-coupled receptor for denatonium and N(6)-propyl-2-thiouracil implicated in the perception of bitter compounds in the oral cavity and the gastrointestinal tract. Signals through PLCB2 and the calcium-regulated cation channel TRPM5. In airway epithelial cells, binding of denatonium increases the intracellular calcium ion concentration and stimulates ciliary beat frequency. This chain is Taste receptor type 2 member 4 (Tas2r4), found in Mus musculus (Mouse).